A 358-amino-acid chain; its full sequence is MAKVAILGAGNVALTLAGDLARRLGQVSSIWAPISNRNSFNSVRSLGSLELVGPDYGGDFQPQLEDDLETAISGAAFIFLTVPTMGQQGILCELANFNLSSSVLVALPGSATSLACKQTLTPAFAPIAVIEATTSPYACRRVNAQVLMLSVKRTFEVASTQALSEEVRGGFEILFPNRLQWYQNPASIFFSNTNPVAHPAGILAAKDTIEQGISPIPKFYRKFVPQAITRVTAIDEERLTIVNALGLESETDFAYCKKWYGGHASNAREFYETFEGYADIETPRNMNHRYLSEDVKHILVLWVEIAEVIGVQVPEMKSVVQEASDVLNEDLSHTGRGLSSLNLEGSNANAIVRALNGV.

Belongs to the lysopine/nopaline/octopine/opine/vitopine dehydrogenases family. In terms of assembly, monomer.

It catalyses the reaction D-octopine + NAD(+) + H2O = L-arginine + pyruvate + NADH + H(+). It carries out the reaction D-lysopine + NADP(+) + H2O = L-lysine + pyruvate + NADPH + H(+). Functionally, reductive condensation of pyruvate and arginine, lysine, histidine, or octopine to form octopine, lysopine, histopine, or octopinic acid, respectively. NADPH is the preferred cofactor, but NADH can also be used. The protein is Protein ocs (ocs) of Agrobacterium tumefaciens (strain Ach5).